Consider the following 140-residue polypeptide: Methylglyoxal synthase (140 aa).

One can recognise an MGS-like domain in the interval 1–140; that stretch reads MKIALIAHDR…HDQDSNPINL (140 aa). Residues H8, K12, 34–37, and 54–55 each bind substrate; these read TGTT and SG. D60 functions as the Proton donor/acceptor in the catalytic mechanism. Residue H87 coordinates substrate.

This sequence belongs to the methylglyoxal synthase family.

It carries out the reaction dihydroxyacetone phosphate = methylglyoxal + phosphate. In terms of biological role, catalyzes the formation of methylglyoxal from dihydroxyacetone phosphate. This Latilactobacillus sakei subsp. sakei (strain 23K) (Lactobacillus sakei subsp. sakei) protein is Methylglyoxal synthase.